Reading from the N-terminus, the 372-residue chain is Cyclin-dependent kinase 9 (372 aa).

The 297-residue stretch at 19 to 315 folds into the Protein kinase domain; the sequence is YEKLAKIGQG…SDDALNHDFF (297 aa). Residues 25-33 and Lys48 contribute to the ATP site; that span reads IGQGTFGEV. Asp149 functions as the Proton acceptor in the catalytic mechanism. Positions 341 to 372 are disordered; the sequence is PPRRRGGHMPQQPANQGRNPAATNQTEFDRVF. The span at 352–366 shows a compositional bias: polar residues; it reads QPANQGRNPAATNQT.

It belongs to the protein kinase superfamily. CMGC Ser/Thr protein kinase family. CDC2/CDKX subfamily. Associates with cyclin-T to form P-TEFb. Also associates with cyclin-K.

It localises to the nucleus. It catalyses the reaction L-seryl-[protein] + ATP = O-phospho-L-seryl-[protein] + ADP + H(+). The catalysed reaction is L-threonyl-[protein] + ATP = O-phospho-L-threonyl-[protein] + ADP + H(+). The enzyme catalyses [DNA-directed RNA polymerase] + ATP = phospho-[DNA-directed RNA polymerase] + ADP + H(+). In terms of biological role, member of the cyclin-dependent kinase pair (CDK9/cyclin-T) complex, also called positive transcription elongation factor b (P-TEFb), which facilitates the transition from abortive to production elongation by phosphorylating the CTD (C-terminal domain) of the large subunit of RNA polymerase II (RNAP II), SUPT5H and RDBP. The CDK9/cyclin-K complex also has a kinase activity toward CTD of RNAP II and can substitute for P-TEFb in vitro. The chain is Cyclin-dependent kinase 9 (CDK9) from Gallus gallus (Chicken).